The chain runs to 712 residues: Effector protein HopM1 (712 aa).

A disordered region spans residues 22-58 (DTVPAQTAHPNAVTAGMNPPLTPDQSGSHATESSSAG). The span at 44–57 (PDQSGSHATESSSA) shows a compositional bias: polar residues.

As to quaternary structure, interacts with the chaperone ShcM. Interacts with host plant BIG5/ATMIN7.

The protein localises to the secreted. It localises to the host membrane. Its function is as follows. Involved in the suppression of basal resistance and promotion of disease symptoms in plants. Mediates the ubiquitination and degradation, via the host proteasome, of a low-abundance immunity-associated protein in Arabidopsis thaliana. May be involved in the inhibition of a host vesicle trafficking pathway. The sequence is that of Effector protein HopM1 (hopM1) from Pseudomonas syringae pv. tomato (strain ATCC BAA-871 / DC3000).